A 673-amino-acid chain; its full sequence is MAKIAQGAMYRGSVHDFPEFDANQDAEALYTAMKGFGSDKESILELITSRSNKQRQEICQNYKSLYGKDLIEDLKYELTGKFERLIVNLMRPLAYCDAKEIKDAISGVGTDEKCLIEILASRTNEQMHQLVAAYKDAYERDLESDIIGDTSGHFQKMLVVLLQGTRENDDVVSEDLVQQDVQDLYEAGELKWGTDEAQFIYILGNRSKQHLRLVFDEYLKTTGKPIEASIRGELSGDFEKLMLAVVKCIRSTPEYFAERLFKAMKGLGTRDNTLIRIMVSRSELDMLDIREIFRTKYEKSLYSMIKNDTSGEYKKALLKLCGGDDDAAGQFFPEAAQVAYQMWELSAVSRVELKGTVCAANDFNPDADAKALRKAMKGIGTDEATIIDIVTHRSNAQRQQIRQTFKSHFGRDLMADLKSEISGDLARLILGLMMPPAHYDAKQLKKAMEGAGTDEKTLIEILATRTNAEIRAINEAYKEDYHKSLEDALSSDTSGHFRRILISLATGNREEGGENRDQAQEDAQVAAEILEIADTPSGDKTSLETRFMTVLCTRSYPHLRRVFQEFIKKTNYDIEHVIKKEMSGDVKDAFVAIVQSVKNKPLFFADKLYKSMKGAGTDEKTLTRVMVSRSEIDLLNIRREFIEKYDKSLHQAIEGDTSGDFMKALLALCGGED.

N-acetylalanine is present on Ala-2. The residue at position 13 (Ser-13) is a Phosphoserine. 8 Annexin repeats span residues 20 to 91 (FDAN…NLMR), 92 to 163 (PLAY…VLLQ), 175 to 247 (DLVQ…AVVK), 251 to 322 (STPE…KLCG), 363 to 434 (FNPD…GLMM), 435 to 506 (PPAH…SLAT), 521 to 595 (EDAQ…AIVQ), and 599 to 670 (NKPL…ALCG). Tyr-30 carries the post-translational modification Phosphotyrosine. Residues Lys-63, Lys-68, Lys-75, and Lys-81 each carry the N6-acetyllysine modification. The residue at position 201 (Tyr-201) is a Phosphotyrosine. N6-acetyllysine is present on residues Lys-306, Lys-370, and Lys-418. Position 422 is a phosphoserine (Ser-422). An N6-acetyllysine modification is found at Lys-483. Phosphoserine is present on Ser-537. Lys-620 carries the post-translational modification N6-acetyllysine.

Belongs to the annexin family.

It localises to the cytoplasm. The protein resides in the melanosome. Its function is as follows. May associate with CD21. May regulate the release of Ca(2+) from intracellular stores. The chain is Annexin A6 (Anxa6) from Mus musculus (Mouse).